A 2283-amino-acid chain; its full sequence is Serine-rich adhesin for platelets (2283 aa).

The N-terminal stretch at methionine 1 to phenylalanine 89 is a signal peptide. Residues alanine 90–alanine 230 are serine-rich repeat region 1, SRR1. Over residues leucine 100 to asparagine 111 the composition is skewed to polar residues. Disordered regions lie at residues leucine 100–alanine 230, asparagine 691–threonine 721, and asparagine 751–glycine 2255. Over residues serine 112–threonine 128 the composition is skewed to low complexity. Positions lysine 129 to aspartate 140 are enriched in polar residues. The segment covering asparagine 149 to threonine 229 has biased composition (low complexity). Residues proline 231–asparagine 751 are non-repeat region (NRR). Low complexity-rich tracts occupy residues serine 752–isoleucine 1323, serine 1330–serine 1894, and aspartate 1901–serine 2225. A serine-rich repeat region 2, SRR2 region spans residues serine 752–threonine 2244. Residues leucine 2241–glycine 2245 carry the LPXTG sorting signal motif. Threonine 2244 is subject to Pentaglycyl murein peptidoglycan amidated threonine. Residues glycine 2245–alanine 2283 constitute a propeptide, removed by sortase.

It belongs to the serine-rich repeat protein (SRRP) family. Proteolytically cleaved by a metalloprotease. In terms of processing, glycosylated. It is probable that most of the Ser residues in SSR1 and SSR2 are O-GlcNAcylated. Sequential glycosylation by sugar transferases are able to generate complex sugar polymorphisms.

Its subcellular location is the secreted. It is found in the cell wall. Functionally, mediates binding to human platelets, possibly through a receptor-ligand interaction. Probably associated with virulence in endovascular infection. This Staphylococcus aureus protein is Serine-rich adhesin for platelets (sraP).